The following is a 98-amino-acid chain: NADH-ubiquinone oxidoreductase chain 4L (98 aa).

3 helical membrane passes run 1-21, 26-46, and 61-81; these read MPLI…GVLI, LMSS…LVSL, and LILL…LVMV.

This sequence belongs to the complex I subunit 4L family. As to quaternary structure, core subunit of respiratory chain NADH dehydrogenase (Complex I) which is composed of 45 different subunits.

It localises to the mitochondrion inner membrane. The catalysed reaction is a ubiquinone + NADH + 5 H(+)(in) = a ubiquinol + NAD(+) + 4 H(+)(out). Core subunit of the mitochondrial membrane respiratory chain NADH dehydrogenase (Complex I) which catalyzes electron transfer from NADH through the respiratory chain, using ubiquinone as an electron acceptor. Part of the enzyme membrane arm which is embedded in the lipid bilayer and involved in proton translocation. This Nycticebus coucang (Slow loris) protein is NADH-ubiquinone oxidoreductase chain 4L (MT-ND4L).